Here is a 295-residue protein sequence, read N- to C-terminus: Protease Rv3090 (295 aa).

Transmembrane regions (helical) follow at residues 2-22 and 37-57; these read TWQI…ALFW and VTIA…FTIV.

The protein resides in the cell membrane. The protein localises to the secreted. Its subcellular location is the cell wall. Functionally, protease that triggers late cell apoptosis and contributes to the pathogenicity and dissemination of M.tuberculosis. In a mouse model of infection, can induce hepatocyte and lung cell apoptosis and cause pathological damage to the spleen, liver and lungs. Specifically stimulates the secretion of inflammatory cytokines including TNF-alpha, IL-6 and IL-1 beta. Can degrade casein in vitro. This Mycobacterium tuberculosis (strain ATCC 25618 / H37Rv) protein is Protease Rv3090.